Here is a 517-residue protein sequence, read N- to C-terminus: Ribose import ATP-binding protein RbsA 1 (517 aa).

ABC transporter domains follow at residues 11 to 251 (LEMR…VGRD) and 263 to 507 (YDPG…ALAT). 43-50 (GENGAGKS) lines the ATP pocket.

The protein belongs to the ABC transporter superfamily. Ribose importer (TC 3.A.1.2.1) family. The complex is composed of an ATP-binding protein (RbsA), two transmembrane proteins (RbsC) and a solute-binding protein (RbsB).

It is found in the cell inner membrane. The catalysed reaction is D-ribose(out) + ATP + H2O = D-ribose(in) + ADP + phosphate + H(+). Part of the ABC transporter complex RbsABC involved in ribose import. Responsible for energy coupling to the transport system. In Burkholderia cenocepacia (strain HI2424), this protein is Ribose import ATP-binding protein RbsA 1.